Consider the following 596-residue polypeptide: ATP-dependent lipid A-core flippase (596 aa).

The next 6 helical transmembrane spans lie at 34–54, 80–100, 138–158, 164–184, 263–283, and 292–312; these read VWVL…EAGI, AAVV…GYLL, AVVF…ITLV, VVFL…IVAI, QPLT…IAVV, and VGGF…LKHL. Residues 38–321 enclose the ABC transmembrane type-1 domain; the sequence is VAGVLAMAAV…LMDVNQPLQR (284 aa). In terms of domain architecture, ABC transporter spans 353 to 589; sequence IEFSHVSFSY…GGLYAHLHRI (237 aa). 389-396 lines the ATP pocket; the sequence is GPSGSGKT.

It belongs to the ABC transporter superfamily. Lipid exporter (TC 3.A.1.106) family. In terms of assembly, homodimer.

The protein localises to the cell inner membrane. It carries out the reaction ATP + H2O + lipid A-core oligosaccharideSide 1 = ADP + phosphate + lipid A-core oligosaccharideSide 2.. Functionally, involved in lipopolysaccharide (LPS) biosynthesis. Translocates lipid A-core from the inner to the outer leaflet of the inner membrane. Transmembrane domains (TMD) form a pore in the inner membrane and the ATP-binding domain (NBD) is responsible for energy generation. The polypeptide is ATP-dependent lipid A-core flippase (Burkholderia mallei (strain ATCC 23344)).